A 188-amino-acid polypeptide reads, in one-letter code: ADP-ribosylation factor K (188 aa).

Residues 34–40 (DGAGKST), 75–79 (DVGGQ), and 134–137 (NKQD) contribute to the GTP site.

It belongs to the small GTPase superfamily. Arf family.

The protein resides in the golgi apparatus. GTP-binding protein that may be involved in protein trafficking. May modulate vesicle budding and uncoating within the Golgi apparatus. This Dictyostelium discoideum (Social amoeba) protein is ADP-ribosylation factor K (arrK).